Consider the following 215-residue polypeptide: Adenylate kinase (215 aa).

10–15 provides a ligand contact to ATP; that stretch reads GAGKGT. The segment at 30–59 is NMP; sequence STGDIFRKNISENTPLGMEARSYMDKGLLV. AMP contacts are provided by residues Thr31, Arg36, 57–59, 85–88, and Gln92; these read LLV and GFPR. Positions 126 to 163 are LID; the sequence is GRRVCTSCGGSFHIKFNPPTIDGKCNLCGSDIVQRKDD. An ATP-binding site is contributed by Arg127. 2 residues coordinate Zn(2+): Cys130 and Cys133. 136–137 lines the ATP pocket; that stretch reads SF. Zn(2+)-binding residues include Cys150 and Cys153. Residues Arg160 and Arg171 each coordinate AMP. ATP is bound at residue Lys199.

It belongs to the adenylate kinase family. Monomer.

The protein resides in the cytoplasm. The catalysed reaction is AMP + ATP = 2 ADP. It participates in purine metabolism; AMP biosynthesis via salvage pathway; AMP from ADP: step 1/1. Catalyzes the reversible transfer of the terminal phosphate group between ATP and AMP. Plays an important role in cellular energy homeostasis and in adenine nucleotide metabolism. The sequence is that of Adenylate kinase from Clostridium botulinum (strain Eklund 17B / Type B).